The primary structure comprises 473 residues: Photosystem II CP43 reaction center protein (473 aa).

Positions 1-14 (MKTLYSLRRFYHVE) are excised as a propeptide. Threonine 15 is modified (N-acetylthreonine). Position 15 is a phosphothreonine (threonine 15). 5 helical membrane passes run 69-93 (LFEV…PHLA), 134-155 (LLGP…KDRN), 178-200 (KALF…RKIT), 255-275 (KPFA…LSYS), and 291-312 (WFNN…ASQA). Glutamate 367 contributes to the [CaMn4O5] cluster binding site. The helical transmembrane segment at 447 to 471 (RARAAAAGFEKGIDRDFEPVLSMTP) threads the bilayer.

The protein belongs to the PsbB/PsbC family. PsbC subfamily. As to quaternary structure, PSII is composed of 1 copy each of membrane proteins PsbA, PsbB, PsbC, PsbD, PsbE, PsbF, PsbH, PsbI, PsbJ, PsbK, PsbL, PsbM, PsbT, PsbX, PsbY, PsbZ, Psb30/Ycf12, at least 3 peripheral proteins of the oxygen-evolving complex and a large number of cofactors. It forms dimeric complexes. Binds multiple chlorophylls and provides some of the ligands for the Ca-4Mn-5O cluster of the oxygen-evolving complex. It may also provide a ligand for a Cl- that is required for oxygen evolution. PSII binds additional chlorophylls, carotenoids and specific lipids. is required as a cofactor.

The protein resides in the plastid. The protein localises to the chloroplast thylakoid membrane. In terms of biological role, one of the components of the core complex of photosystem II (PSII). It binds chlorophyll and helps catalyze the primary light-induced photochemical processes of PSII. PSII is a light-driven water:plastoquinone oxidoreductase, using light energy to abstract electrons from H(2)O, generating O(2) and a proton gradient subsequently used for ATP formation. The chain is Photosystem II CP43 reaction center protein from Fagopyrum esculentum subsp. ancestrale (Wild buckwheat).